We begin with the raw amino-acid sequence, 277 residues long: Diaminopimelate epimerase (277 aa).

Residues N13, Q46, and N66 each coordinate substrate. C75 functions as the Proton donor in the catalytic mechanism. Residues 76–77, N159, N192, and 210–211 contribute to the substrate site; these read GN and ER. The active-site Proton acceptor is the C219. Residue 220 to 221 participates in substrate binding; the sequence is GT.

The protein belongs to the diaminopimelate epimerase family. As to quaternary structure, homodimer.

The protein resides in the cytoplasm. It catalyses the reaction (2S,6S)-2,6-diaminopimelate = meso-2,6-diaminopimelate. It functions in the pathway amino-acid biosynthesis; L-lysine biosynthesis via DAP pathway; DL-2,6-diaminopimelate from LL-2,6-diaminopimelate: step 1/1. Its function is as follows. Catalyzes the stereoinversion of LL-2,6-diaminopimelate (L,L-DAP) to meso-diaminopimelate (meso-DAP), a precursor of L-lysine and an essential component of the bacterial peptidoglycan. This chain is Diaminopimelate epimerase, found in Aromatoleum aromaticum (strain DSM 19018 / LMG 30748 / EbN1) (Azoarcus sp. (strain EbN1)).